The following is a 292-amino-acid chain: Pantothenate synthetase (292 aa).

30–37 (MGFLHIGH) contacts ATP. H37 acts as the Proton donor in catalysis. (R)-pantoate is bound at residue Q61. Beta-alanine is bound at residue Q61. 147–150 (GEKD) lines the ATP pocket. Q153 contacts (R)-pantoate. ATP-binding positions include V176 and 184–187 (CSSR).

Belongs to the pantothenate synthetase family. In terms of assembly, homodimer.

The protein localises to the cytoplasm. The catalysed reaction is (R)-pantoate + beta-alanine + ATP = (R)-pantothenate + AMP + diphosphate + H(+). It participates in cofactor biosynthesis; (R)-pantothenate biosynthesis; (R)-pantothenate from (R)-pantoate and beta-alanine: step 1/1. Functionally, catalyzes the condensation of pantoate with beta-alanine in an ATP-dependent reaction via a pantoyl-adenylate intermediate. The sequence is that of Pantothenate synthetase from Agrobacterium fabrum (strain C58 / ATCC 33970) (Agrobacterium tumefaciens (strain C58)).